The chain runs to 20 residues: Outer membrane protein 40Va (20 aa).

Belongs to the Gram-negative porin family. Homotrimer.

The protein resides in the cell outer membrane. Functionally, forms pores that allow passive diffusion of small molecules across the outer membrane. The chain is Outer membrane protein 40Va from Vibrio alginolyticus.